Reading from the N-terminus, the 319-residue chain is Cytochrome f (319 aa).

The N-terminal stretch at 1–34 is a signal peptide; that stretch reads MQNRNTYEWTKKMTRLISVLVMIHIITRTSISNA. The heme site is built by Y35, C55, C58, and H59. A helical transmembrane segment spans residues 285 to 305; the sequence is VKGLLLFLASVILAQIFLVLK.

Belongs to the cytochrome f family. In terms of assembly, the 4 large subunits of the cytochrome b6-f complex are cytochrome b6, subunit IV (17 kDa polypeptide, petD), cytochrome f and the Rieske protein, while the 4 small subunits are PetG, PetL, PetM and PetN. The complex functions as a dimer. The cofactor is heme.

Its subcellular location is the plastid. The protein localises to the chloroplast thylakoid membrane. Functionally, component of the cytochrome b6-f complex, which mediates electron transfer between photosystem II (PSII) and photosystem I (PSI), cyclic electron flow around PSI, and state transitions. This chain is Cytochrome f, found in Pinus koraiensis (Korean pine).